Here is a 726-residue protein sequence, read N- to C-terminus: MVVDSYQKKETKKYRNFIPRREQILFLLKTDKDLISQKKLEKKFSINSQEQKKALRRRLRAMERDGQIIYTRNRCYITPENLKIVTGKVIGHRDGYGFLRTETFKDDLWLSIEQMKLCIHGDVILAHIVKSDRKGRNSAKVLKILRPNDVLIVGRYCVDNKKKFVIPNDTRFNFKIFILDSLISNENISIGTIVVVKLRENATKKSKIQGTIVEVLGKEMGTNLAIKIALRTHCIPYLWSKEVEYQLCGIKSKINEKDFKNRIDLRHLPFFTIDEEDARDFDDAIFCKKKTNGEKGWKLWVAISDVSYYIQPDTALDKAASKRGTSIYFPSLVIPMLPEKISIDVCSLNPNAERLSLICEMNLSNKGELITYKHYEAVICSHGRFTYNEIFKIWNGDIELCFKYKKLLKYIQNLSSLQKILKKYNVSKRGIYFENIEAKFILDSNYRIKNISQNIRNDAHKFIESCMILANIASAEFVKKHKSPVLFRNHDRPDKDSIINFRSVLKKLGLSLLGGEIPESTDYSELLKKISTRPDYEMIQTILLRSMKQAVYSPDNRGHFGLSLSSYVHFTSPIRRYPDLLVHRVIKNLLLKEKNLSKYHLYNLNEVTKIGLHCSMTERRADEATRDVLDWLKCDFMQKKIGDVLTGVISNVTSFGFFVRLNQFFIDGLVHIATLIDDYYYFDSIGLKLIGKSSKNTYCLGDTLKVKVISVNLNERKIELSLYMSR.

In terms of domain architecture, RNB spans 262-590; that stretch reads RIDLRHLPFF…LVHRVIKNLL (329 aa). The S1 motif domain maps to 642–723; that stretch reads GDVLTGVISN…NERKIELSLY (82 aa).

The protein belongs to the RNR ribonuclease family. RNase R subfamily. In terms of assembly, monomer.

The protein localises to the cytoplasm. The enzyme catalyses Exonucleolytic cleavage in the 3'- to 5'-direction to yield nucleoside 5'-phosphates.. In terms of biological role, 3'-5' exoribonuclease that releases 5'-nucleoside monophosphates and is involved in maturation of structured RNAs. This Buchnera aphidicola subsp. Schizaphis graminum (strain Sg) protein is Ribonuclease R.